A 195-amino-acid polypeptide reads, in one-letter code: Imidazoleglycerol-phosphate dehydratase (195 aa).

It belongs to the imidazoleglycerol-phosphate dehydratase family.

It localises to the cytoplasm. The catalysed reaction is D-erythro-1-(imidazol-4-yl)glycerol 3-phosphate = 3-(imidazol-4-yl)-2-oxopropyl phosphate + H2O. The protein operates within amino-acid biosynthesis; L-histidine biosynthesis; L-histidine from 5-phospho-alpha-D-ribose 1-diphosphate: step 6/9. The chain is Imidazoleglycerol-phosphate dehydratase from Paraburkholderia phytofirmans (strain DSM 17436 / LMG 22146 / PsJN) (Burkholderia phytofirmans).